Here is a 2442-residue protein sequence, read N- to C-terminus: Centrosome-associated protein CEP250 (2442 aa).

4 coiled-coil regions span residues 95-158 (NLDE…KESQ), 244-352 (AQLL…TQVM), 395-1172 (LTRR…EQQP), and 1243-2227 (SALH…KERL). Basic and acidic residues-rich tracts occupy residues 1273 to 1289 (LTDTEAEKSQVHTELQD) and 1699 to 1715 (LTTQRQLMQERAEEGKG). 3 disordered regions span residues 1273 to 1308 (LTDTEAEKSQVHTELQDLQRQLSQNQEEKSKWEGKQ), 1699 to 1725 (LTTQRQLMQERAEEGKGPSKAQRGSLE), and 1820 to 1839 (EALQQEQQQAQGQEERVKEK). Positions 1820 to 1831 (EALQQEQQQAQG) are enriched in low complexity. The residue at position 2138 (serine 2138) is a Phosphoserine. The residue at position 2218 (threonine 2218) is a Phosphothreonine. Positions 2223–2244 (EKERLHSPGATSTAELGSRGEQ) are disordered. A phosphoserine mark is found at serine 2229, serine 2252, and serine 2322. Positions 2262-2376 (GMEKQSWRQR…RKQKQDYITR (115 aa)) form a coiled coil. Disordered stretches follow at residues 2307–2345 (RRKLKREAMRAAQAGSLEISKATASSPTQQDGRGQKNSD) and 2416–2442 (ESLTQSLTSPGPVLLHPSPSTTQAASR). Over residues 2328–2338 (ATASSPTQQDG) the composition is skewed to polar residues. Serine 2417 and serine 2421 each carry phosphoserine; by NEK2. Over residues 2433–2442 (SPSTTQAASR) the composition is skewed to polar residues.

As to quaternary structure, monomer and homodimer. Forms a complex in vitro with both NEK2 kinase and the PPP1CC catalytic subunit of protein phosphatase 1 (PP1). Interacts with CEP135. Interacts with CROCC/rootletin. Interacts with CNTLN. Interacts with NIN (via C-terminus). Interacts with CCDC102B (via N-terminus); the interaction results in recruitment of CCDC102B to the proximal ends of centrioles. In terms of processing, differentially phosphorylated during cell cycle. Phosphorylation may regulate association/dissociation from centrosome. During M phase of mitosis, C-terminal part is phosphorylated by NEK2, suggesting that it may trigger the dissociation from the mitotic centrosome. Dephosphorylated in vitro by the PP1 phosphatase. In terms of tissue distribution, ubiquitously and weakly expressed.

The protein resides in the cytoplasm. Its subcellular location is the perinuclear region. It is found in the cytoskeleton. The protein localises to the microtubule organizing center. It localises to the centrosome. The protein resides in the centriole. Its subcellular location is the cilium basal body. It is found in the cell projection. The protein localises to the cilium. It localises to the photoreceptor outer segment. The protein resides in the photoreceptor inner segment. Plays an important role in centrosome cohesion during interphase. Recruits CCDC102B to the proximal ends of centrioles. Maintains centrosome cohesion by forming intercentriolar linkages. Accumulates at the proximal end of each centriole, forming supramolecular assemblies with viscous material properties that promote organelle cohesion. May be involved in ciliogenesis. The chain is Centrosome-associated protein CEP250 (CEP250) from Homo sapiens (Human).